The chain runs to 365 residues: Quinolone epoxide rearrangement protein asqO (365 aa).

It belongs to the quinolone epoxide rearrangement protein penF family.

It catalyses the reaction (1'E,3'E)-5-(3,3-dimethyloxiran-2-yl)-3-methylhexa-1,3-dienyl-quinolinone B = aspoquinolone A. The catalysed reaction is (1'E,3'E)-5-(3,3-dimethyloxiran-2-yl)-3-methylhexa-1,3-dienyl-quinolinone B = aspoquinolone B. The protein operates within secondary metabolite biosynthesis. It participates in alkaloid biosynthesis. It functions in the pathway mycotoxin biosynthesis. Its function is as follows. Quinolone epoxide rearrangement protein; part of the gene cluster that mediates the biosynthesis of the aspoquinolone mycotoxins. Within the pathway, asqO catalyzes an enzymatic 3-exo-tet cyclization to yield the cyclopropyl-THF ring system in aspoquinolone. The first step of the pathway is catalyzed by the nonribosomal peptide synthetase asqK that condenses anthranilic acid and O-methyl-L-tyrosine to produce 4'-methoxycyclopeptin. 4'-methoxycyclopeptin is then converted to 4'-methoxydehydrocyclopeptin by the ketoglutarate-dependent dioxygenase asqJ. AsqJ also converts its first product 4'-methoxydehydrocyclopeptin to 4'-methoxycyclopenin. The following conversion of 4'-methoxycyclopenin into 4'-methoxyviridicatin is catalyzed by the cyclopenase asqI. 4'-methoxyviridicatin is the precursor of quinolone natural products, and is further converted to quinolinone B. The prenyltransferase asqH1 then catalyzes the canonical Friedel-Crafts alkylation of quinolinone B with dimethylallyl cation to yield dimethylallyl quinolone, which is subjected to FAD-dependent dehydrogenation by the FAD-linked oxidoreductase asqF to yield conjugated aryl diene. The delta(3') double bond then serves as the site of the second alkylation with DMAPP catalyzed by the prenyltransferase asqH2 to yield a carbenium ion intermediate, which can be attacked by H(2)O to yield a styrenyl quinolone containing a C3'-hydroxyprenyl chain. The FAD-dependent monooxygenase asqG performs epoxidation of the terminal C7'-C8' olefin. Finally, after dehydratation of the epoxide at C3 by asqC, the quinolone epoxide rearrangement protein asqO catalyzes an enzymatic 3-exo-tet cyclization to yield the cyclopropyl-THF ring system in aspoquinolone. The protein is Quinolone epoxide rearrangement protein asqO of Emericella nidulans (strain FGSC A4 / ATCC 38163 / CBS 112.46 / NRRL 194 / M139) (Aspergillus nidulans).